Here is a 391-residue protein sequence, read N- to C-terminus: tRNA-specific 2-thiouridylase MnmA (391 aa).

ATP is bound by residues Gly9 to Ser16 and Met35. Positions Asn95 to Asp97 are interaction with target base in tRNA. Cys100 (nucleophile) is an active-site residue. Cys100 and Cys196 are disulfide-bonded. Gly124 serves as a coordination point for ATP. Positions Lys146–Gln148 are interaction with tRNA. Catalysis depends on Cys196, which acts as the Cysteine persulfide intermediate. Residues Arg308–Tyr309 form an interaction with tRNA region.

This sequence belongs to the MnmA/TRMU family.

The protein resides in the cytoplasm. It catalyses the reaction S-sulfanyl-L-cysteinyl-[protein] + uridine(34) in tRNA + AH2 + ATP = 2-thiouridine(34) in tRNA + L-cysteinyl-[protein] + A + AMP + diphosphate + H(+). Functionally, catalyzes the 2-thiolation of uridine at the wobble position (U34) of tRNA, leading to the formation of s(2)U34. This Burkholderia cenocepacia (strain HI2424) protein is tRNA-specific 2-thiouridylase MnmA.